Here is a 233-residue protein sequence, read N- to C-terminus: 5'-methylthioadenosine/S-adenosylhomocysteine nucleosidase (233 aa).

The active-site Proton acceptor is the E12. Substrate contacts are provided by residues G78, I156, and 177-178 (ME). Catalysis depends on D201, which acts as the Proton donor.

Belongs to the PNP/UDP phosphorylase family. MtnN subfamily.

It catalyses the reaction S-adenosyl-L-homocysteine + H2O = S-(5-deoxy-D-ribos-5-yl)-L-homocysteine + adenine. It carries out the reaction S-methyl-5'-thioadenosine + H2O = 5-(methylsulfanyl)-D-ribose + adenine. The catalysed reaction is 5'-deoxyadenosine + H2O = 5-deoxy-D-ribose + adenine. The protein operates within amino-acid biosynthesis; L-methionine biosynthesis via salvage pathway; S-methyl-5-thio-alpha-D-ribose 1-phosphate from S-methyl-5'-thioadenosine (hydrolase route): step 1/2. In terms of biological role, catalyzes the irreversible cleavage of the glycosidic bond in both 5'-methylthioadenosine (MTA) and S-adenosylhomocysteine (SAH/AdoHcy) to adenine and the corresponding thioribose, 5'-methylthioribose and S-ribosylhomocysteine, respectively. Also cleaves 5'-deoxyadenosine, a toxic by-product of radical S-adenosylmethionine (SAM) enzymes, into 5-deoxyribose and adenine. This chain is 5'-methylthioadenosine/S-adenosylhomocysteine nucleosidase, found in Listeria welshimeri serovar 6b (strain ATCC 35897 / DSM 20650 / CCUG 15529 / CIP 8149 / NCTC 11857 / SLCC 5334 / V8).